A 133-amino-acid polypeptide reads, in one-letter code: Holo-[acyl-carrier-protein] synthase (133 aa).

Mg(2+)-binding residues include D8 and E64.

The protein belongs to the P-Pant transferase superfamily. AcpS family. Mg(2+) serves as cofactor.

Its subcellular location is the cytoplasm. It carries out the reaction apo-[ACP] + CoA = holo-[ACP] + adenosine 3',5'-bisphosphate + H(+). Its function is as follows. Transfers the 4'-phosphopantetheine moiety from coenzyme A to a Ser of acyl-carrier-protein. The polypeptide is Holo-[acyl-carrier-protein] synthase (Shewanella loihica (strain ATCC BAA-1088 / PV-4)).